A 325-amino-acid chain; its full sequence is Probable cell division protein WhiA (325 aa).

The segment at residues 273–306 (SLEELGALADPPLTKDAVAGRIRRLLALADKRAN) is a DNA-binding region (H-T-H motif).

It belongs to the WhiA family.

Functionally, involved in cell division and chromosome segregation. The chain is Probable cell division protein WhiA from Frankia alni (strain DSM 45986 / CECT 9034 / ACN14a).